A 355-amino-acid polypeptide reads, in one-letter code: S-adenosylmethionine:tRNA ribosyltransferase-isomerase (355 aa).

Belongs to the QueA family. Monomer.

It localises to the cytoplasm. It carries out the reaction 7-aminomethyl-7-carbaguanosine(34) in tRNA + S-adenosyl-L-methionine = epoxyqueuosine(34) in tRNA + adenine + L-methionine + 2 H(+). It functions in the pathway tRNA modification; tRNA-queuosine biosynthesis. Its function is as follows. Transfers and isomerizes the ribose moiety from AdoMet to the 7-aminomethyl group of 7-deazaguanine (preQ1-tRNA) to give epoxyqueuosine (oQ-tRNA). This Gluconacetobacter diazotrophicus (strain ATCC 49037 / DSM 5601 / CCUG 37298 / CIP 103539 / LMG 7603 / PAl5) protein is S-adenosylmethionine:tRNA ribosyltransferase-isomerase.